We begin with the raw amino-acid sequence, 218 residues long: Thiopurine S-methyltransferase (218 aa).

Tryptophan 10, leucine 45, glutamate 66, and arginine 123 together coordinate S-adenosyl-L-methionine.

Belongs to the class I-like SAM-binding methyltransferase superfamily. TPMT family.

It is found in the cytoplasm. The enzyme catalyses S-adenosyl-L-methionine + a thiopurine = S-adenosyl-L-homocysteine + a thiopurine S-methylether.. In Shewanella baltica (strain OS195), this protein is Thiopurine S-methyltransferase.